The sequence spans 566 residues: MSGRLGELLVRENLISVQQLRKAQEEQQKNGTRIGTALVKTGAIEESKLTDFLSKQYGVPAINLKDFDVEPDIIKLVPKEVAEKHLVVPVNRAGPSLIVAMCDPSNIFAVDDLKFLTGYNIETVVASEVSIREAIERYYAEKGPSLEDIVGDVGDDIEVTKEETENIDEMAKAADDAPVVKLVNLILMDAIKKRASDIHVEPYEKDFRVRFRIDGVMYEVMRPPMKLRNAITSRLKIMASLDISERRLPQDGRIKIKMGGGKEMDFRVSVCPTLFGEKVVMRLLDKSNLQLDMTKLGFDAQPLAWFKEAIDRPYGMVLVTGPTGSGKTTTLYSALSSLNGLDTNICTAEDPVEFNFAGINQVQMHDDIGLNFAAALRSFLRQDPDIIMIGEIRDFETAEIGVKAALTGHLVLSTLHTNDAPGTVSRLLNMGIEPFLVTASLNLILAQRLARRLCPACKKPAENVDEQALIDAGVPPDKIGTFTMYEKVGCRDCNDRGYRGRVAIYEVMPFWDGLKELVINGASAAELKQEAIRLGMSSLRMSGLRKMMDGATTLEEVVGNTAPDRF.

321-328 contributes to the ATP binding site; it reads GPTGSGKT. Zn(2+)-binding residues include C454, C457, C490, and C493.

This sequence belongs to the GSP E family. As to quaternary structure, homohexamer. Interacts with PilC. Interacts with PilM.

It localises to the cytoplasm. ATPase component of the type IV pilus (T4P) that plays a role in surface and host cell adhesion, colonization, biofilm maturation, virulence, and twitching, a form of surface-associated motility facilitated by cycles of extension, adhesion, and retraction of T4P fibers. Acts as a molecular motor to provide the energy that is required for biogenesis of the pilus and the extrusion of substrates generated in the cytoplasm. PilB ATPase activity is also essential for T4P extension while antagonist PilT ATPase activity is required for T4P retraction. In addition, functions as a regulator of exopolysaccharide (EPS) downstream of the T4P filament and upstream of the Dif signaling. The sequence is that of Type IV pilus assembly ATPase PilB (pilB) from Myxococcus xanthus (strain DK1622).